The chain runs to 204 residues: Large ribosomal subunit protein uL10 (204 aa).

Residues 170 to 204 (AADPSVIGGAGEASDQEPKTTETPEASAAQDNTNE) form a disordered region. Positions 192-204 (TPEASAAQDNTNE) are enriched in polar residues.

It belongs to the universal ribosomal protein uL10 family. In terms of assembly, part of the ribosomal stalk of the 50S ribosomal subunit. The N-terminus interacts with L11 and the large rRNA to form the base of the stalk. The C-terminus forms an elongated spine to which L12 dimers bind in a sequential fashion forming a multimeric L10(L12)X complex.

Its function is as follows. Forms part of the ribosomal stalk, playing a central role in the interaction of the ribosome with GTP-bound translation factors. This Cutibacterium acnes (strain DSM 16379 / KPA171202) (Propionibacterium acnes) protein is Large ribosomal subunit protein uL10.